A 429-amino-acid chain; its full sequence is Probable M18 family aminopeptidase 2 (429 aa).

Positions 82, 156, and 401 each coordinate Zn(2+).

Belongs to the peptidase M18 family. It depends on Zn(2+) as a cofactor.

The sequence is that of Probable M18 family aminopeptidase 2 from Stutzerimonas stutzeri (strain A1501) (Pseudomonas stutzeri).